We begin with the raw amino-acid sequence, 157 residues long: Ribonuclease H (157 aa).

An RNase H type-1 domain is found at methionine 1–lysine 142. Mg(2+)-binding residues include aspartate 10, glutamate 48, aspartate 70, and aspartate 134.

Belongs to the RNase H family. Monomer. Mg(2+) is required as a cofactor.

The protein resides in the cytoplasm. The enzyme catalyses Endonucleolytic cleavage to 5'-phosphomonoester.. Functionally, endonuclease that specifically degrades the RNA of RNA-DNA hybrids. In Wigglesworthia glossinidia brevipalpis, this protein is Ribonuclease H.